The chain runs to 109 residues: MLLKSTTRHIRIYTAEVKNNQLIESNNVLTLDVDPDNEFNWEEVALNKVYSKFDELVESYNGEELSEYNLRRIGSDLEHFIRSLLQKGEISYNLNARVQNYSMGLPKLG.

It belongs to the complex I NdhM subunit family. In terms of assembly, NDH-1 can be composed of about 15 different subunits; different subcomplexes with different compositions have been identified which probably have different functions.

It localises to the cellular thylakoid membrane. It catalyses the reaction a plastoquinone + NADH + (n+1) H(+)(in) = a plastoquinol + NAD(+) + n H(+)(out). It carries out the reaction a plastoquinone + NADPH + (n+1) H(+)(in) = a plastoquinol + NADP(+) + n H(+)(out). In terms of biological role, NDH-1 shuttles electrons from an unknown electron donor, via FMN and iron-sulfur (Fe-S) centers, to quinones in the respiratory and/or the photosynthetic chain. The immediate electron acceptor for the enzyme in this species is believed to be plastoquinone. Couples the redox reaction to proton translocation, and thus conserves the redox energy in a proton gradient. Cyanobacterial NDH-1 also plays a role in inorganic carbon-concentration. This chain is NAD(P)H-quinone oxidoreductase subunit M, found in Microcystis aeruginosa (strain NIES-843 / IAM M-2473).